The following is a 154-amino-acid chain: Putative pre-16S rRNA nuclease (154 aa).

It belongs to the YqgF nuclease family.

It is found in the cytoplasm. In terms of biological role, could be a nuclease involved in processing of the 5'-end of pre-16S rRNA. The chain is Putative pre-16S rRNA nuclease from Gluconacetobacter diazotrophicus (strain ATCC 49037 / DSM 5601 / CCUG 37298 / CIP 103539 / LMG 7603 / PAl5).